We begin with the raw amino-acid sequence, 959 residues long: Isoleucine--tRNA ligase (959 aa).

A 'HIGH' region motif is present at residues 60–70 (PYANGSLHMGH). Residue Glu-569 participates in L-isoleucyl-5'-AMP binding. The 'KMSKS' region signature appears at 610–614 (KMSKS). Lys-613 contributes to the ATP binding site. Zn(2+) is bound by residues Cys-928, Cys-931, Cys-948, and Cys-951.

The protein belongs to the class-I aminoacyl-tRNA synthetase family. IleS type 1 subfamily. Monomer. It depends on Zn(2+) as a cofactor.

It localises to the cytoplasm. The catalysed reaction is tRNA(Ile) + L-isoleucine + ATP = L-isoleucyl-tRNA(Ile) + AMP + diphosphate. Functionally, catalyzes the attachment of isoleucine to tRNA(Ile). As IleRS can inadvertently accommodate and process structurally similar amino acids such as valine, to avoid such errors it has two additional distinct tRNA(Ile)-dependent editing activities. One activity is designated as 'pretransfer' editing and involves the hydrolysis of activated Val-AMP. The other activity is designated 'posttransfer' editing and involves deacylation of mischarged Val-tRNA(Ile). The sequence is that of Isoleucine--tRNA ligase from Gloeothece citriformis (strain PCC 7424) (Cyanothece sp. (strain PCC 7424)).